The following is a 163-amino-acid chain: SsrA-binding protein (163 aa).

The protein belongs to the SmpB family.

The protein localises to the cytoplasm. Required for rescue of stalled ribosomes mediated by trans-translation. Binds to transfer-messenger RNA (tmRNA), required for stable association of tmRNA with ribosomes. tmRNA and SmpB together mimic tRNA shape, replacing the anticodon stem-loop with SmpB. tmRNA is encoded by the ssrA gene; the 2 termini fold to resemble tRNA(Ala) and it encodes a 'tag peptide', a short internal open reading frame. During trans-translation Ala-aminoacylated tmRNA acts like a tRNA, entering the A-site of stalled ribosomes, displacing the stalled mRNA. The ribosome then switches to translate the ORF on the tmRNA; the nascent peptide is terminated with the 'tag peptide' encoded by the tmRNA and targeted for degradation. The ribosome is freed to recommence translation, which seems to be the essential function of trans-translation. This chain is SsrA-binding protein, found in Shewanella sp. (strain ANA-3).